The chain runs to 73 residues: Ferredoxin-thioredoxin reductase, variable chain (73 aa).

The interaction with ferredoxin stretch occupies residues 43-46; sequence NGKP.

Belongs to the ferredoxin thioredoxin reductase alpha subunit family. As to quaternary structure, heterodimer of subunit A (variable subunit) and subunit B (catalytic subunit). Heterodimeric FTR forms a complex with ferredoxin and thioredoxin.

Its function is as follows. Variable subunit of the ferredoxin-thioredoxin reductase (FTR), which catalyzes the two-electron reduction of thioredoxins by the electrons provided by reduced ferredoxin. This is Ferredoxin-thioredoxin reductase, variable chain (ftrV) from Synechococcus sp. (strain ATCC 27144 / PCC 6301 / SAUG 1402/1) (Anacystis nidulans).